The chain runs to 467 residues: ATP synthase subunit beta (467 aa).

Position 150–157 (150–157 (GGAGVGKT)) interacts with ATP.

This sequence belongs to the ATPase alpha/beta chains family. In terms of assembly, F-type ATPases have 2 components, CF(1) - the catalytic core - and CF(0) - the membrane proton channel. CF(1) has five subunits: alpha(3), beta(3), gamma(1), delta(1), epsilon(1). CF(0) has three main subunits: a(1), b(2) and c(9-12). The alpha and beta chains form an alternating ring which encloses part of the gamma chain. CF(1) is attached to CF(0) by a central stalk formed by the gamma and epsilon chains, while a peripheral stalk is formed by the delta and b chains.

It localises to the cell inner membrane. The enzyme catalyses ATP + H2O + 4 H(+)(in) = ADP + phosphate + 5 H(+)(out). Produces ATP from ADP in the presence of a proton gradient across the membrane. The catalytic sites are hosted primarily by the beta subunits. The protein is ATP synthase subunit beta of Aliivibrio salmonicida (strain LFI1238) (Vibrio salmonicida (strain LFI1238)).